A 315-amino-acid polypeptide reads, in one-letter code: PIH1 domain-containing protein 2 (315 aa).

This sequence belongs to the PIH1 family.

This Homo sapiens (Human) protein is PIH1 domain-containing protein 2 (PIH1D2).